A 564-amino-acid chain; its full sequence is Proline--tRNA ligase (564 aa).

This sequence belongs to the class-II aminoacyl-tRNA synthetase family. ProS type 1 subfamily. Homodimer.

The protein resides in the cytoplasm. The enzyme catalyses tRNA(Pro) + L-proline + ATP = L-prolyl-tRNA(Pro) + AMP + diphosphate. In terms of biological role, catalyzes the attachment of proline to tRNA(Pro) in a two-step reaction: proline is first activated by ATP to form Pro-AMP and then transferred to the acceptor end of tRNA(Pro). As ProRS can inadvertently accommodate and process non-cognate amino acids such as alanine and cysteine, to avoid such errors it has two additional distinct editing activities against alanine. One activity is designated as 'pretransfer' editing and involves the tRNA(Pro)-independent hydrolysis of activated Ala-AMP. The other activity is designated 'posttransfer' editing and involves deacylation of mischarged Ala-tRNA(Pro). The misacylated Cys-tRNA(Pro) is not edited by ProRS. The chain is Proline--tRNA ligase from Coxiella burnetii (strain Dugway 5J108-111).